Here is a 420-residue protein sequence, read N- to C-terminus: G2/mitotic-specific cyclin-A (420 aa).

Residues valine 64–aspartate 93 are disordered. Residues glutamine 83–aspartate 93 show a composition bias toward polar residues.

Belongs to the cyclin family. Cyclin AB subfamily.

Its function is as follows. Essential for the control of the cell cycle at the G2/M (mitosis) transition. Interacts with the CDC2 and CDK2 protein kinases to form MPF. G2/M cyclins accumulate steadily during G2 and are abruptly destroyed at mitosis. This chain is G2/mitotic-specific cyclin-A, found in Hydra viridissima (Green hydra).